The primary structure comprises 316 residues: Acetyl-coenzyme A carboxylase carboxyl transferase subunit beta (316 aa).

The 270-residue stretch at 39-308 (LWHKCSKCGV…PPHMVLWETM (270 aa)) folds into the CoA carboxyltransferase N-terminal domain. 4 residues coordinate Zn(2+): Cys43, Cys46, Cys62, and Cys65. Residues 43 to 65 (CSKCGVLAYTKDLKANQMVCIEC) form a C4-type zinc finger.

Belongs to the AccD/PCCB family. As to quaternary structure, acetyl-CoA carboxylase is a heterohexamer composed of biotin carboxyl carrier protein (AccB), biotin carboxylase (AccC) and two subunits each of ACCase subunit alpha (AccA) and ACCase subunit beta (AccD). Zn(2+) is required as a cofactor.

The protein resides in the cytoplasm. The catalysed reaction is N(6)-carboxybiotinyl-L-lysyl-[protein] + acetyl-CoA = N(6)-biotinyl-L-lysyl-[protein] + malonyl-CoA. The protein operates within lipid metabolism; malonyl-CoA biosynthesis; malonyl-CoA from acetyl-CoA: step 1/1. Component of the acetyl coenzyme A carboxylase (ACC) complex. Biotin carboxylase (BC) catalyzes the carboxylation of biotin on its carrier protein (BCCP) and then the CO(2) group is transferred by the transcarboxylase to acetyl-CoA to form malonyl-CoA. The sequence is that of Acetyl-coenzyme A carboxylase carboxyl transferase subunit beta from Nostoc punctiforme (strain ATCC 29133 / PCC 73102).